A 543-amino-acid chain; its full sequence is Protein pbn1 (543 aa).

The Lumenal portion of the chain corresponds to 1–503 (MRRRITFVQR…KGFFQSKAIE (503 aa)). An N-linked (GlcNAc...) asparagine glycan is attached at Asn-409. Residues 504–524 (LGTMIVIGLGSLWVLWKLGAI) traverse the membrane as a helical segment. The Cytoplasmic segment spans residues 525-543 (AWSSGTRPQRKSTKQKKSE).

Belongs to the PIGX family.

It localises to the endoplasmic reticulum membrane. It participates in glycolipid biosynthesis; glycosylphosphatidylinositol-anchor biosynthesis. Functionally, required for proper folding and/or the stability of a subset of proteins in the endoplasmic reticulum. Component of glycosylphosphatidylinositol-mannosyltransferase 1 which transfers the first of the 4 mannoses in the GPI-anchor precursors during GPI-anchor biosynthesis. Probably acts by stabilizing the mannosyltransferase gpi14. The protein is Protein pbn1 (pbn1) of Aspergillus oryzae (strain ATCC 42149 / RIB 40) (Yellow koji mold).